Reading from the N-terminus, the 487-residue chain is N-succinylglutamate 5-semialdehyde dehydrogenase (487 aa).

Position 221–226 (221–226 (GSSDTG)) interacts with NAD(+). Catalysis depends on residues E244 and C278.

This sequence belongs to the aldehyde dehydrogenase family. AstD subfamily.

The enzyme catalyses N-succinyl-L-glutamate 5-semialdehyde + NAD(+) + H2O = N-succinyl-L-glutamate + NADH + 2 H(+). It functions in the pathway amino-acid degradation; L-arginine degradation via AST pathway; L-glutamate and succinate from L-arginine: step 4/5. In terms of biological role, catalyzes the NAD-dependent reduction of succinylglutamate semialdehyde into succinylglutamate. The sequence is that of N-succinylglutamate 5-semialdehyde dehydrogenase from Paraburkholderia xenovorans (strain LB400).